The following is a 451-amino-acid chain: Tubulin alpha-1 chain (451 aa).

GTP is bound at residue Q11. An N6-acetyllysine modification is found at K40. Residues E71, G144, T145, T179, N206, and N228 each coordinate GTP. A Mg(2+)-binding site is contributed by E71. E254 is a catalytic residue.

This sequence belongs to the tubulin family. As to quaternary structure, dimer of alpha and beta chains. A typical microtubule is a hollow water-filled tube with an outer diameter of 25 nm and an inner diameter of 15 nM. Alpha-beta heterodimers associate head-to-tail to form protofilaments running lengthwise along the microtubule wall with the beta-tubulin subunit facing the microtubule plus end conferring a structural polarity. Microtubules usually have 13 protofilaments but different protofilament numbers can be found in some organisms and specialized cells. The cofactor is Mg(2+). Undergoes a tyrosination/detyrosination cycle, the cyclic removal and re-addition of a C-terminal tyrosine residue by the enzymes tubulin tyrosine carboxypeptidase (TTCP) and tubulin tyrosine ligase (TTL), respectively. Post-translationally, acetylation of alpha chains at Lys-40 stabilizes microtubules and affects affinity and processivity of microtubule motors. This modification has a role in multiple cellular functions, ranging from cell motility, cell cycle progression or cell differentiation to intracellular trafficking and signaling.

The protein resides in the cytoplasm. It is found in the cytoskeleton. It carries out the reaction GTP + H2O = GDP + phosphate + H(+). Tubulin is the major constituent of microtubules, a cylinder consisting of laterally associated linear protofilaments composed of alpha- and beta-tubulin heterodimers. Microtubules grow by the addition of GTP-tubulin dimers to the microtubule end, where a stabilizing cap forms. Below the cap, tubulin dimers are in GDP-bound state, owing to GTPase activity of alpha-tubulin. This chain is Tubulin alpha-1 chain (TUBA1), found in Chlamydomonas reinhardtii (Chlamydomonas smithii).